A 163-amino-acid polypeptide reads, in one-letter code: Regulatory protein RecX (163 aa).

The tract at residues M1 to V21 is disordered.

This sequence belongs to the RecX family.

It is found in the cytoplasm. In terms of biological role, modulates RecA activity. This Stenotrophomonas maltophilia (strain R551-3) protein is Regulatory protein RecX.